A 233-amino-acid chain; its full sequence is Putative T-box protein 41 (233 aa).

Positions 1–146 (MTVTRNGCRI…MNPHARHFLK (146 aa)) form a DNA-binding region, T-box.

It is found in the nucleus. The polypeptide is Putative T-box protein 41 (tbx-41) (Caenorhabditis elegans).